A 352-amino-acid polypeptide reads, in one-letter code: MSGTDKVRVNVSQTAQTPLHTSAKLPKVGVLLVNLGTPDGTSYGPMRRYLAEFLSDRRVIEWSRLIWYPILYGIVLNTRPRRSGRLYDRIWNHENNESPLRTYTRAQGEKLAKALSDQPNVVVDWAMRYGQPSIESITDRLLQQGCERIVIFPLYPQYSATTTATVNDKFFEALMKKRFMPAIRTVPSYEAEPVYIDALARSVEKHLATLSFKPEVILTSYHGIPKSYSDKGDPYRQQCLETTRLLRERLGLGEDEMRATFQSRFGPEEWLQPYTDETVKELAKNGVKLVAVLNPGFVADCLETVDEIGNEAAEEFLENGGENFSHIPCLNDSEEGMKVIETLVRRELLGWV.

Residues histidine 222 and glutamate 303 each contribute to the Fe cation site.

The protein belongs to the ferrochelatase family.

It is found in the cytoplasm. It catalyses the reaction heme b + 2 H(+) = protoporphyrin IX + Fe(2+). The protein operates within porphyrin-containing compound metabolism; protoheme biosynthesis; protoheme from protoporphyrin-IX: step 1/1. Catalyzes the ferrous insertion into protoporphyrin IX. The polypeptide is Ferrochelatase (Brucella abortus (strain S19)).